A 275-amino-acid chain; its full sequence is 5'-nucleotidase SurE (275 aa).

A divalent metal cation-binding residues include D12, D13, S44, and N102.

Belongs to the SurE nucleotidase family. Requires a divalent metal cation as cofactor.

The protein localises to the cytoplasm. It carries out the reaction a ribonucleoside 5'-phosphate + H2O = a ribonucleoside + phosphate. In terms of biological role, nucleotidase that shows phosphatase activity on nucleoside 5'-monophosphates. The polypeptide is 5'-nucleotidase SurE (Synechococcus sp. (strain RCC307)).